Consider the following 286-residue polypeptide: tRNA (guanine-N(7)-)-methyltransferase (286 aa).

2 positions are modified to phosphoserine: Ser7 and Ser59. S-adenosyl-L-methionine contacts are provided by residues Gly103, 126-127 (EI), 161-162 (NA), and Cys181. Asp184 is a catalytic residue. Residue 259–261 (TEE) participates in S-adenosyl-L-methionine binding.

It belongs to the class I-like SAM-binding methyltransferase superfamily. TrmB family. Forms a complex with TRM82.

The protein localises to the nucleus. The enzyme catalyses guanosine(46) in tRNA + S-adenosyl-L-methionine = N(7)-methylguanosine(46) in tRNA + S-adenosyl-L-homocysteine. It functions in the pathway tRNA modification; N(7)-methylguanine-tRNA biosynthesis. Methyltransferase that catalyzes the formation of N(7)-methylguanine at position 46 (m7G46) in tRNA, a modification required to maintain stability of tRNAs; its absence resulting in tRNA decay. Both the D-stem and T-stem structures of tRNAs are required for efficient methyltransferase activity. This is tRNA (guanine-N(7)-)-methyltransferase from Saccharomyces cerevisiae (strain RM11-1a) (Baker's yeast).